A 555-amino-acid polypeptide reads, in one-letter code: Carboxylesterase patB (555 aa).

Residues 1-16 form the signal peptide; that stretch reads MLFTASLLLLLPWASA. N-linked (GlcNAc...) asparagine glycosylation is found at asparagine 37 and asparagine 75. The active-site Acyl-ester intermediate is serine 258. Residue serine 258 coordinates substrate. A glycan (N-linked (GlcNAc...) asparagine) is linked at asparagine 311. Glutamate 380 (charge relay system) is an active-site residue. N-linked (GlcNAc...) asparagine glycans are attached at residues asparagine 388 and asparagine 491.

The protein belongs to the type-B carboxylesterase/lipase family.

It localises to the cytoplasm. The protein resides in the cytosol. It catalyses the reaction a carboxylic ester + H2O = an alcohol + a carboxylate + H(+). Its pathway is mycotoxin biosynthesis; patulin biosynthesis. In terms of biological role, carboxylesterase; part of the gene cluster that mediates the biosynthesis of patulin, an acetate-derived tetraketide mycotoxin produced by several fungal species that shows antimicrobial properties against several bacteria. The function of patB in patulin synthesis has still to be characterized. The pathway begins with the synthesis of 6-methylsalicylic acid by the polyketide synthase (PKS) patK via condensation of acetate and malonate units. The 6-methylsalicylic acid decarboxylase patG then catalyzes the decarboxylation of 6-methylsalicylic acid to yield m-cresol (also known as 3-methylphenol). These first reactions occur in the cytosol. The intermediate m-cresol is then transported into the endoplasmic reticulum where the cytochrome P450 monooxygenase patH converts it to m-hydroxybenzyl alcohol, which is further converted to gentisyl alcohol by the cytochrome P450 monooxygenase patI. The oxidoreductases patJ and patO further convert gentisyl alcohol to isoepoxydon in the vacuole. PatN catalyzes then the transformation of isoepoxydon into phyllostine. The cluster protein patF is responsible for the conversion from phyllostine to neopatulin whereas the alcohol dehydrogenase patD converts neopatulin to E-ascladiol. The steps between isoepoxydon and E-ascladiol occur in the cytosol, and E-ascladiol is probably secreted to the extracellular space by one of the cluster-specific transporters patC or patM. Finally, the secreted patulin synthase patE catalyzes the conversion of E-ascladiol to patulin. The chain is Carboxylesterase patB from Aspergillus clavatus (strain ATCC 1007 / CBS 513.65 / DSM 816 / NCTC 3887 / NRRL 1 / QM 1276 / 107).